The primary structure comprises 550 residues: Chaperonin GroEL (550 aa).

Residues 30 to 33, lysine 51, 87 to 91, glycine 415, 479 to 481, and aspartate 495 each bind ATP; these read TLGP, DGTTT, and NAA.

Belongs to the chaperonin (HSP60) family. As to quaternary structure, forms a cylinder of 14 subunits composed of two heptameric rings stacked back-to-back. Interacts with the co-chaperonin GroES.

It is found in the cytoplasm. It catalyses the reaction ATP + H2O + a folded polypeptide = ADP + phosphate + an unfolded polypeptide.. Functionally, together with its co-chaperonin GroES, plays an essential role in assisting protein folding. The GroEL-GroES system forms a nano-cage that allows encapsulation of the non-native substrate proteins and provides a physical environment optimized to promote and accelerate protein folding. This Polaromonas sp. (strain JS666 / ATCC BAA-500) protein is Chaperonin GroEL.